The sequence spans 116 residues: Peptidyl-tRNA hydrolase (116 aa).

This sequence belongs to the PTH2 family.

Its subcellular location is the cytoplasm. It catalyses the reaction an N-acyl-L-alpha-aminoacyl-tRNA + H2O = an N-acyl-L-amino acid + a tRNA + H(+). Its function is as follows. The natural substrate for this enzyme may be peptidyl-tRNAs which drop off the ribosome during protein synthesis. The chain is Peptidyl-tRNA hydrolase from Methanococcus maripaludis (strain C7 / ATCC BAA-1331).